The following is a 642-amino-acid chain: Kelch-like protein 17 (642 aa).

Positions 1-53 are disordered; the sequence is MQPRSERPAGRTQSPEHGSPGPGPEAPPPPPPQPPAPEAERTRPRQARPAAPM. The span at 21–37 shows a compositional bias: pro residues; sequence GPGPEAPPPPPPQPPAP. The BTB domain occupies 92 to 159; sequence CDIVLHVAAK…AYTAEIVVGE (68 aa). Residues 194 to 296 form the BACK domain; the sequence is CLGIRGFADA…SRDFLLGHVD (103 aa). Residues 289 to 641 form an interaction with F-actin region; that stretch reads DFLLGHVDAE…SPTLSVSSTS (353 aa). 6 Kelch repeats span residues 343–389, 390–436, 438–483, 484–530, 532–577, and 578–624; these read VLFA…AVGN, RLYA…ALHG, LYSA…TLDG, NLYA…VLEG, LYVA…AMDG, and WLYA…VLEL. Positions 640-642 are interaction with PDZK1; sequence TSL.

As to quaternary structure, interacts with F-actin; the interaction disrupts the F-actin structures and leads to marked changes of neuronal morphology. Component of a complex, composed of PDZK1, SYNGAP1, KLHL17 and NMDA receptors. Interacts directly with PDZK1 (via PDZ1 domain); the interaction is important for integrity of actin cytoskeleton structures in neurons. Interacts with DLG4 and SYNGAP1. Interacts (via kelch repeats) with GRIK2 (via C-terminus); the interaction targets GRIK2 for degradation via ubiquitin-proteasome pathway. Interacts with GRIK1. Interacts with (via BTB domain) CUL3; the interaction regulates surface GRIK2 expression.

The protein resides in the postsynaptic density. Its subcellular location is the synapse. It functions in the pathway protein modification; protein ubiquitination. Its function is as follows. Substrate-recognition component of some cullin-RING-based BCR (BTB-CUL3-RBX1) E3 ubiquitin-protein ligase complexes. The BCR(KLHL17) complex mediates the ubiquitination and subsequent degradation of GLUR6. May play a role in the actin-based neuronal function. This Homo sapiens (Human) protein is Kelch-like protein 17 (KLHL17).